A 248-amino-acid chain; its full sequence is 3-deoxy-manno-octulosonate cytidylyltransferase (248 aa).

The protein belongs to the KdsB family.

The protein resides in the cytoplasm. The catalysed reaction is 3-deoxy-alpha-D-manno-oct-2-ulosonate + CTP = CMP-3-deoxy-beta-D-manno-octulosonate + diphosphate. It participates in nucleotide-sugar biosynthesis; CMP-3-deoxy-D-manno-octulosonate biosynthesis; CMP-3-deoxy-D-manno-octulosonate from 3-deoxy-D-manno-octulosonate and CTP: step 1/1. The protein operates within bacterial outer membrane biogenesis; lipopolysaccharide biosynthesis. Its function is as follows. Activates KDO (a required 8-carbon sugar) for incorporation into bacterial lipopolysaccharide in Gram-negative bacteria. The sequence is that of 3-deoxy-manno-octulosonate cytidylyltransferase from Escherichia fergusonii (strain ATCC 35469 / DSM 13698 / CCUG 18766 / IAM 14443 / JCM 21226 / LMG 7866 / NBRC 102419 / NCTC 12128 / CDC 0568-73).